Consider the following 460-residue polypeptide: Argininosuccinate lyase (460 aa).

It belongs to the lyase 1 family. Argininosuccinate lyase subfamily.

The protein localises to the cytoplasm. The enzyme catalyses 2-(N(omega)-L-arginino)succinate = fumarate + L-arginine. Its pathway is amino-acid biosynthesis; L-arginine biosynthesis; L-arginine from L-ornithine and carbamoyl phosphate: step 3/3. The sequence is that of Argininosuccinate lyase from Sulfurimonas denitrificans (strain ATCC 33889 / DSM 1251) (Thiomicrospira denitrificans (strain ATCC 33889 / DSM 1251)).